Here is a 179-residue protein sequence, read N- to C-terminus: ATP synthase subunit b (179 aa).

The helical transmembrane segment at 23 to 43 (IVVGLVAFGLLAFVLMKFVFP) threads the bilayer.

The protein belongs to the ATPase B chain family. In terms of assembly, F-type ATPases have 2 components, F(1) - the catalytic core - and F(0) - the membrane proton channel. F(1) has five subunits: alpha(3), beta(3), gamma(1), delta(1), epsilon(1). F(0) has three main subunits: a(1), b(2) and c(10-14). The alpha and beta chains form an alternating ring which encloses part of the gamma chain. F(1) is attached to F(0) by a central stalk formed by the gamma and epsilon chains, while a peripheral stalk is formed by the delta and b chains.

It is found in the cell membrane. In terms of biological role, f(1)F(0) ATP synthase produces ATP from ADP in the presence of a proton or sodium gradient. F-type ATPases consist of two structural domains, F(1) containing the extramembraneous catalytic core and F(0) containing the membrane proton channel, linked together by a central stalk and a peripheral stalk. During catalysis, ATP synthesis in the catalytic domain of F(1) is coupled via a rotary mechanism of the central stalk subunits to proton translocation. Component of the F(0) channel, it forms part of the peripheral stalk, linking F(1) to F(0). The sequence is that of ATP synthase subunit b from Salinispora arenicola (strain CNS-205).